Here is a 1481-residue protein sequence, read N- to C-terminus: Coiled-coil domain-containing protein 88B (1481 aa).

2 coiled-coil regions span residues 200–225 and 258–491; these read ELVA…RERD and SHHL…GSQH. 3 disordered regions span residues 430–458, 494–731, and 1331–1481; these read ELQR…QDEV, LEEQ…AIPE, and PRRE…SLSQ. At Ser-441 the chain carries Phosphoserine. 2 stretches are compositionally biased toward polar residues: residues 542 to 557 and 568 to 590; these read ASYS…SQAP and QMVS…TVET. Residue Ser-649 is modified to Phosphoserine. Residues 660 to 695 are compositionally biased toward basic and acidic residues; it reads TLREPLKDQKALDRELELSKQQKETGRHEQRPKGLE. Residues 731 to 1308 are a coiled coil; the sequence is EEQALRDEVA…KIMDQYRVLE (578 aa). Residues Ser-1353 and Ser-1384 each carry the phosphoserine modification. Residues 1371–1386 show a composition bias toward polar residues; it reads TGSSSPAPMRRVQSSL. Over residues 1453–1472 the composition is skewed to basic and acidic residues; that stretch reads LSEHEADDTREAFQEQKPEK.

It belongs to the CCDC88 family. As to quaternary structure, homodimer. Interacts with DOCK8. Interacts (via C-terminus) with intact microtubules. Interacts with dynein-dynactin motor complex. Interacts (via C-terminus) with HSPA5. As to expression, abundantly expressed in immune cells, including both CD4(+) and CD8(+) T-cells and in myeloid cells (at protein level). Expressed in endothelium (at protein level). Expressed specifically in spleen, bone marrow, lymph nodes and thymus. Expressed in liver and heart.

The protein localises to the membrane. It localises to the cytoplasm. It is found in the cytoskeleton. Its subcellular location is the microtubule organizing center. The protein resides in the endoplasmic reticulum. The protein localises to the golgi apparatus. Acts as a positive regulator of T-cell maturation and inflammatory function. Required for several functions of T-cells in both the CD4(+) and the CD8(+) compartments and this includes expression of cell surface markers of activation, proliferation, and cytokine production in response to specific or non-specific stimulation and during the course of infection with the mouse malaria parasite Plasmodium berghei. Enhances NK cell cytotoxicity by positively regulating polarization of microtubule-organizing center (MTOC) to cytotoxic synapse, lytic granule transport along microtubules, and dynein-mediated clustering to MTOC. Interacts with HSPA5 and stabilizes the interaction between HSPA5 and ERN1, leading to suppression of ERN1-induced JNK activation and endoplasmic reticulum stress-induced apoptosis. The protein is Coiled-coil domain-containing protein 88B (Ccdc88b) of Mus musculus (Mouse).